Here is a 279-residue protein sequence, read N- to C-terminus: NAD kinase (279 aa).

Catalysis depends on Asp-61, which acts as the Proton acceptor. NAD(+)-binding positions include 61-62 (DG), 138-139 (ND), Lys-149, Lys-166, Asp-168, and 179-184 (TGYSFS).

Belongs to the NAD kinase family. A divalent metal cation is required as a cofactor.

The protein localises to the cytoplasm. The catalysed reaction is NAD(+) + ATP = ADP + NADP(+) + H(+). In terms of biological role, involved in the regulation of the intracellular balance of NAD and NADP, and is a key enzyme in the biosynthesis of NADP. Catalyzes specifically the phosphorylation on 2'-hydroxyl of the adenosine moiety of NAD to yield NADP. The protein is NAD kinase of Borreliella burgdorferi (strain ATCC 35210 / DSM 4680 / CIP 102532 / B31) (Borrelia burgdorferi).